A 365-amino-acid polypeptide reads, in one-letter code: Undecaprenyl-phosphate alpha-N-acetylglucosaminyl 1-phosphate transferase (365 aa).

Helical transmembrane passes span 3–23, 45–65, 99–119, 132–152, 157–177, 187–207, 213–233, 242–262, 293–313, and 315–335; these read LLTMSTELIYIFLFSMAFLFV, GLIPLVGGISVFAGVCFAFLI, IRAFVQALVGIAMMAVAGLYL, VLGPFGYVVTLFAVWAAINAF, GIDGLLGGLSCVSFGAMGILL, LWCFAMIATIIPYILLNLGLL, VFMGDAGSTLIGFTAIWILLQ, INPVTALWIIAIPLMDMIAIM, QAFVLITLAAALLAMIGVIGE, and LTFIPEWVMLALFLLAFLLYG.

It belongs to the glycosyltransferase 4 family. WecA subfamily. Mg(2+) is required as a cofactor. Mn(2+) serves as cofactor.

It is found in the cell inner membrane. The enzyme catalyses di-trans,octa-cis-undecaprenyl phosphate + UDP-N-acetyl-alpha-D-glucosamine = N-acetyl-alpha-D-glucosaminyl-di-trans,octa-cis-undecaprenyl diphosphate + UMP. It functions in the pathway bacterial outer membrane biogenesis; LPS O-antigen biosynthesis. Its pathway is bacterial outer membrane biogenesis; enterobacterial common antigen biosynthesis. Functionally, catalyzes the transfer of the GlcNAc-1-phosphate moiety from UDP-GlcNAc onto the carrier lipid undecaprenyl phosphate (C55-P), yielding GlcNAc-pyrophosphoryl-undecaprenyl (GlcNAc-PP-C55). The chain is Undecaprenyl-phosphate alpha-N-acetylglucosaminyl 1-phosphate transferase from Yersinia pestis.